The following is a 530-amino-acid chain: Copine-D (530 aa).

2 consecutive C2 domains span residues 1 to 122 (MNPI…RMKM) and 130 to 248 (LSGS…EFEI). Ca(2+) is bound by residues Asp-25, Asp-31, Asp-85, Asp-87, and Asp-100. The 219-residue stretch at 289–507 (NLMVAIDCTA…ALAHETLKEI (219 aa)) folds into the VWFA domain.

Belongs to the copine family. Ca(2+) is required as a cofactor.

In Dictyostelium discoideum (Social amoeba), this protein is Copine-D (cpnD).